The primary structure comprises 349 residues: Phenylalanine--tRNA ligase alpha subunit (349 aa).

E259 serves as a coordination point for Mg(2+).

This sequence belongs to the class-II aminoacyl-tRNA synthetase family. Phe-tRNA synthetase alpha subunit type 1 subfamily. Tetramer of two alpha and two beta subunits. It depends on Mg(2+) as a cofactor.

It localises to the cytoplasm. The catalysed reaction is tRNA(Phe) + L-phenylalanine + ATP = L-phenylalanyl-tRNA(Phe) + AMP + diphosphate + H(+). This Lactobacillus johnsonii (strain CNCM I-12250 / La1 / NCC 533) protein is Phenylalanine--tRNA ligase alpha subunit.